Reading from the N-terminus, the 286-residue chain is Putative L-ribulose-5-phosphate 3-epimerase SgbU (286 aa).

This sequence belongs to the L-ribulose-5-phosphate 3-epimerase family.

It carries out the reaction L-ribulose 5-phosphate = L-xylulose 5-phosphate. Catalyzes the isomerization of L-xylulose-5-phosphate to L-ribulose-5-phosphate (Potential). May be involved in the utilization of 2,3-diketo-L-gulonate. This Escherichia coli (strain K12) protein is Putative L-ribulose-5-phosphate 3-epimerase SgbU (sgbU).